The following is a 349-amino-acid chain: DNA replication and repair protein RecF (349 aa).

Position 29–36 (29–36 (GLNGVGKT)) interacts with ATP.

It belongs to the RecF family.

It is found in the cytoplasm. Functionally, the RecF protein is involved in DNA metabolism; it is required for DNA replication and normal SOS inducibility. RecF binds preferentially to single-stranded, linear DNA. It also seems to bind ATP. This Acholeplasma laidlawii (strain PG-8A) protein is DNA replication and repair protein RecF.